The sequence spans 489 residues: Probable cytosol aminopeptidase (489 aa).

Mn(2+) contacts are provided by lysine 260 and aspartate 265. Residue lysine 272 is part of the active site. Mn(2+)-binding residues include aspartate 283, aspartate 342, and glutamate 344. Arginine 346 is a catalytic residue.

This sequence belongs to the peptidase M17 family. Mn(2+) serves as cofactor.

Its subcellular location is the cytoplasm. The enzyme catalyses Release of an N-terminal amino acid, Xaa-|-Yaa-, in which Xaa is preferably Leu, but may be other amino acids including Pro although not Arg or Lys, and Yaa may be Pro. Amino acid amides and methyl esters are also readily hydrolyzed, but rates on arylamides are exceedingly low.. It catalyses the reaction Release of an N-terminal amino acid, preferentially leucine, but not glutamic or aspartic acids.. Its function is as follows. Presumably involved in the processing and regular turnover of intracellular proteins. Catalyzes the removal of unsubstituted N-terminal amino acids from various peptides. This Alcanivorax borkumensis (strain ATCC 700651 / DSM 11573 / NCIMB 13689 / SK2) protein is Probable cytosol aminopeptidase.